The chain runs to 1283 residues: uncharacterized protein (1283 aa).

Residues 10 to 46 enclose the LDL-receptor class A domain; sequence ACPPNTFTCADGSCIPSDWKGDGEKDCEDGSDEEAVT. Cystine bridges form between Cys11-Cys23 and Cys18-Cys36. Residues 27 to 47 form a disordered region; sequence DWKGDGEKDCEDGSDEEAVTG. Acidic residues predominate over residues 34–45; sequence KDCEDGSDEEAV. N-linked (GlcNAc...) asparagine glycosylation occurs at Asn79. Residues 236–278 are disordered; that stretch reads STTLIVDETTESTSASAEDDDDDVLTTNTSEESTATTAHDEEV. The segment covering 261–272 has biased composition (low complexity); it reads TTNTSEESTATT. Residues 332–389 are a coiled coil; that stretch reads YQKTLEKEKCAIRNATSKCEALISYNNNLDCAIVTMNDECEVDAQNLVVELQEEVNDL. Disordered stretches follow at residues 621–651 and 1005–1046; these read ARPTPVTMPPRAPTAKPLPIPSAPTPPVASS and SSST…PTDG. Residues 626-647 are compositionally biased toward pro residues; that stretch reads VTMPPRAPTAKPLPIPSAPTPP. A compositionally biased stretch (low complexity) spans 1005–1015; the sequence is SSSTMVSTSSE. Positions 1016-1026 are enriched in acidic residues; the sequence is SDSESAPEQET. The span at 1027 to 1044 shows a compositional bias: low complexity; that stretch reads EPTVPSTTETTESPSTPT. The helical transmembrane segment at 1263–1283 threads the bilayer; the sequence is VQSSVSFHIILAALIPFFALF.

The protein resides in the membrane. This is an uncharacterized protein from Caenorhabditis elegans.